A 445-amino-acid polypeptide reads, in one-letter code: Ubiquitin carboxyl-terminal hydrolase 11 (445 aa).

The USP domain maps to 1–412 (NSARADLCVA…AAYVLFYQRQ (412 aa)). Residues 127–194 (RPSSDDEDDG…GPSHWPQRAR (68 aa)) form a disordered region. Ser-130 is modified (phosphoserine). Residues 131-140 (DDEDDGDEKD) show a composition bias toward acidic residues. Residue His-362 is the Nucleophile of the active site. Residue His-370 is the Proton acceptor of the active site. The interval 416–445 (RRLQPQPSSSDPPASPACGSPPNSEFMDVN) is disordered. The span at 420–439 (PQPSSSDPPASPACGSPPNS) shows a compositional bias: low complexity. A Phosphoserine modification is found at Ser-430.

This sequence belongs to the peptidase C19 family. As to quaternary structure, monomer. Interacts with RANBP9/RANBPM. Interacts with BRCA2. Interacts with CHUK/IKKA. Interacts with NFKBIA. Associated component of the Polycomb group (PcG) multiprotein PRC1-like complex.

The protein localises to the nucleus. It is found in the cytoplasm. It localises to the chromosome. The enzyme catalyses Thiol-dependent hydrolysis of ester, thioester, amide, peptide and isopeptide bonds formed by the C-terminal Gly of ubiquitin (a 76-residue protein attached to proteins as an intracellular targeting signal).. Functionally, protease that can remove conjugated ubiquitin from target proteins and polyubiquitin chains. Inhibits the degradation of target proteins by the proteasome. Cleaves preferentially 'Lys-6' and 'Lys-63'-linked ubiquitin chains. Has lower activity with 'Lys-11' and 'Lys-33'-linked ubiquitin chains, and extremely low activity with 'Lys-27', 'Lys-29' and 'Lys-48'-linked ubiquitin chains (in vitro). Plays a role in the regulation of pathways leading to NF-kappa-B activation. Plays a role in the regulation of DNA repair after double-stranded DNA breaks. Acts as a chromatin regulator via its association with the Polycomb group (PcG) multiprotein PRC1-like complex; may act by deubiquitinating components of the PRC1-like complex. Promotes cell proliferation by deubiquitinating phosphorylated E2F1. This is Ubiquitin carboxyl-terminal hydrolase 11 (USP11) from Canis lupus familiaris (Dog).